The sequence spans 632 residues: Chaperone protein HtpG (632 aa).

The segment at 1–345 is a; substrate-binding; the sequence is MTTAAHAETL…SKDLSLNVSR (345 aa). Residues 346–561 are b; the sequence is ELLQKDPQVD…EHDMGYQMRR (216 aa). Residues 562-632 are c; that stretch reads LMEAAGQPLP…VQRLNKLLSH (71 aa).

It belongs to the heat shock protein 90 family. In terms of assembly, homodimer.

It localises to the cytoplasm. Molecular chaperone. Has ATPase activity. The protein is Chaperone protein HtpG of Chromohalobacter salexigens (strain ATCC BAA-138 / DSM 3043 / CIP 106854 / NCIMB 13768 / 1H11).